The following is a 174-amino-acid chain: Transcriptional repressor NrdR (174 aa).

Residues 3 to 34 fold into a zinc finger; sequence CPFCQHNDTRVIDSRVSEDGTTIRRRRECEAC. In terms of domain architecture, ATP-cone spans 49–139; the sequence is PTVVKSDGGR…VYRSFQDVAD (91 aa).

The protein belongs to the NrdR family. Zn(2+) is required as a cofactor.

In terms of biological role, negatively regulates transcription of bacterial ribonucleotide reductase nrd genes and operons by binding to NrdR-boxes. This is Transcriptional repressor NrdR from Xanthomonas campestris pv. campestris (strain 8004).